The primary structure comprises 222 residues: Protein-L-isoaspartate O-methyltransferase (222 aa).

The active site involves Ser65.

This sequence belongs to the methyltransferase superfamily. L-isoaspartyl/D-aspartyl protein methyltransferase family.

Its subcellular location is the cytoplasm. The catalysed reaction is [protein]-L-isoaspartate + S-adenosyl-L-methionine = [protein]-L-isoaspartate alpha-methyl ester + S-adenosyl-L-homocysteine. Catalyzes the methyl esterification of L-isoaspartyl residues in peptides and proteins that result from spontaneous decomposition of normal L-aspartyl and L-asparaginyl residues. It plays a role in the repair and/or degradation of damaged proteins. This Chlorobium luteolum (strain DSM 273 / BCRC 81028 / 2530) (Pelodictyon luteolum) protein is Protein-L-isoaspartate O-methyltransferase.